Reading from the N-terminus, the 207-residue chain is ConoCAP (207 aa).

The N-terminal stretch at 1–21 (MVSLGHVLFVILLPVLLPVAA) is a signal peptide. The propeptide occupies 22 to 48 (DDPDDQMLSQISLPSSSRSEYDDNDVS). A disulfide bridge connects residues cysteine 53 and cysteine 59. Residue glycine 60 is modified to Glycine amide. A propeptide spanning residues 63 to 82 (HRDRSRRQERYGKRLIPVLA) is cleaved from the precursor. An intrachain disulfide couples cysteine 87 to cysteine 92. Asparagine 94 is modified (asparagine amide). A propeptide spanning residues 98-160 (SLSGAGPALS…RDPAASGDLS (63 aa)) is cleaved from the precursor. A disordered region spans residues 131-155 (ARHEQQQQLLQQREQRGLESRDPAA). A compositionally biased stretch (basic and acidic residues) spans 143-152 (REQRGLESRD). A disulfide bond links cysteine 165 and cysteine 171. Residue glycine 173 is modified to Glycine amide. Positions 177–207 (TLYSPWLERMNEVADDRSARNALCTRLGWRE) are excised as a propeptide.

As to expression, expressed by the venom duct.

It is found in the secreted. In terms of biological role, in contrast to other members of the CCAP family which are cardio-accelerators, conoCAP-a decreases the heart frequency in Drosophila larvae (26%), rats and zebrafish embryos. It also reduces the blood pressure in rats. It decreases systolic calcium in ventricular cardiac myocytes, indicating that it may act via impairment of intracellular calcium trafficking. Its function is as follows. Synthetic conoCAP-b decreases the heart frequency of 23% in Drosophila larvae. Synthetic conoCAP-c decreases the heart frequency of 12% in Drosophila larvae. The chain is ConoCAP (conoCAP) from Conus villepinii (Villepin's cone).